Reading from the N-terminus, the 632-residue chain is Tetratricopeptide repeat protein 39B (632 aa).

TPR repeat units follow at residues 343-376 (SLVL…QEEW), 535-568 (CLVK…EKLL), and 576-609 (PFTL…YKDY).

This sequence belongs to the TTC39 family.

Regulates high density lipoprotein (HDL) cholesterol metabolism by promoting the ubiquitination and degradation of the oxysterols receptors LXR (NR1H2 and NR1H3). The chain is Tetratricopeptide repeat protein 39B (TTC39B) from Macaca fascicularis (Crab-eating macaque).